Consider the following 317-residue polypeptide: Beta-ketoacyl-[acyl-carrier-protein] synthase III (317 aa).

Catalysis depends on residues C112 and H244. The ACP-binding stretch occupies residues 245 to 249 (QANLR). The active site involves N274.

Belongs to the thiolase-like superfamily. FabH family. Homodimer.

Its subcellular location is the cytoplasm. The catalysed reaction is malonyl-[ACP] + acetyl-CoA + H(+) = 3-oxobutanoyl-[ACP] + CO2 + CoA. It functions in the pathway lipid metabolism; fatty acid biosynthesis. In terms of biological role, catalyzes the condensation reaction of fatty acid synthesis by the addition to an acyl acceptor of two carbons from malonyl-ACP. Catalyzes the first condensation reaction which initiates fatty acid synthesis and may therefore play a role in governing the total rate of fatty acid production. Possesses both acetoacetyl-ACP synthase and acetyl transacylase activities. Its substrate specificity determines the biosynthesis of branched-chain and/or straight-chain of fatty acids. The sequence is that of Beta-ketoacyl-[acyl-carrier-protein] synthase III from Salmonella arizonae (strain ATCC BAA-731 / CDC346-86 / RSK2980).